A 457-amino-acid polypeptide reads, in one-letter code: tRNA-2-methylthio-N(6)-dimethylallyladenosine synthase (457 aa).

The 116-residue stretch at 19-134 (RKLFIETYGC…LPNLVGAVEH (116 aa)) folds into the MTTase N-terminal domain. [4Fe-4S] cluster-binding residues include C28, C64, C98, C172, C176, and C179. The Radical SAM core domain occupies 158 to 390 (PGVHISGFVS…IDLQNKLSEE (233 aa)). Residues 393 to 456 (LRDIGKTFEV…SATLFGEPVE (64 aa)) form the TRAM domain.

This sequence belongs to the methylthiotransferase family. MiaB subfamily. Monomer. [4Fe-4S] cluster is required as a cofactor.

The protein resides in the cytoplasm. The catalysed reaction is N(6)-dimethylallyladenosine(37) in tRNA + (sulfur carrier)-SH + AH2 + 2 S-adenosyl-L-methionine = 2-methylsulfanyl-N(6)-dimethylallyladenosine(37) in tRNA + (sulfur carrier)-H + 5'-deoxyadenosine + L-methionine + A + S-adenosyl-L-homocysteine + 2 H(+). In terms of biological role, catalyzes the methylthiolation of N6-(dimethylallyl)adenosine (i(6)A), leading to the formation of 2-methylthio-N6-(dimethylallyl)adenosine (ms(2)i(6)A) at position 37 in tRNAs that read codons beginning with uridine. This Parabacteroides distasonis (strain ATCC 8503 / DSM 20701 / CIP 104284 / JCM 5825 / NCTC 11152) protein is tRNA-2-methylthio-N(6)-dimethylallyladenosine synthase.